A 325-amino-acid chain; its full sequence is Iodotyrosine dehalogenase 1 homolog (325 aa).

The helical transmembrane segment at 42–62 threads the bilayer; it reads VLNVLFTLGVILFVIYQVASL. The Cytoplasmic segment spans residues 63 to 325; sequence LHRMNKRVEK…KPVEHITKLY (263 aa). FMN is bound by residues 135–139, 163–164, 273–275, and Arg-315; these read RRSCR, SV, and VTS.

It belongs to the nitroreductase family. It depends on FMN as a cofactor. As to expression, expressed in body-wall, anal depressor and vulval muscles.

Its subcellular location is the membrane. May contribute to coordination of muscle contraction as regulatory subunit of the nonessential sup-9 potassium channel complex. May act downstream of sup-10. This Caenorhabditis elegans protein is Iodotyrosine dehalogenase 1 homolog.